Here is a 298-residue protein sequence, read N- to C-terminus: Acetylglutamate kinase (298 aa).

Substrate-binding positions include 69–70, Arg-91, and Asn-196; that span reads GG.

It belongs to the acetylglutamate kinase family. ArgB subfamily.

It is found in the cytoplasm. The catalysed reaction is N-acetyl-L-glutamate + ATP = N-acetyl-L-glutamyl 5-phosphate + ADP. It functions in the pathway amino-acid biosynthesis; L-arginine biosynthesis; N(2)-acetyl-L-ornithine from L-glutamate: step 2/4. In terms of biological role, catalyzes the ATP-dependent phosphorylation of N-acetyl-L-glutamate. In Rhodopseudomonas palustris (strain BisA53), this protein is Acetylglutamate kinase.